The primary structure comprises 419 residues: L-rhamnose isomerase (419 aa).

Positions 262, 294, and 296 each coordinate Mn(2+).

The protein belongs to the rhamnose isomerase family. In terms of assembly, homotetramer. The cofactor is Mn(2+).

The protein resides in the cytoplasm. The enzyme catalyses L-rhamnopyranose = L-rhamnulose. Its pathway is carbohydrate degradation; L-rhamnose degradation; glycerone phosphate from L-rhamnose: step 1/3. In terms of biological role, catalyzes the interconversion of L-rhamnose and L-rhamnulose. The protein is L-rhamnose isomerase of Salmonella enteritidis PT4 (strain P125109).